Consider the following 211-residue polypeptide: Probable nicotinate-nucleotide adenylyltransferase (211 aa).

Belongs to the NadD family.

It carries out the reaction nicotinate beta-D-ribonucleotide + ATP + H(+) = deamido-NAD(+) + diphosphate. Its pathway is cofactor biosynthesis; NAD(+) biosynthesis; deamido-NAD(+) from nicotinate D-ribonucleotide: step 1/1. Functionally, catalyzes the reversible adenylation of nicotinate mononucleotide (NaMN) to nicotinic acid adenine dinucleotide (NaAD). The sequence is that of Probable nicotinate-nucleotide adenylyltransferase from Gemmatimonas aurantiaca (strain DSM 14586 / JCM 11422 / NBRC 100505 / T-27).